A 141-amino-acid chain; its full sequence is MAKKVVGEIKLQIPAGKANPSPPVGPALGQRGVNIMEFCKAFNERTKDMGSFNIPVIITVYQDKSFTFITKKPPVTDLIKKASGVEKGSDNPLKNKVAKLTHKQVEEIAQLKMEDLNTSTMEAAKKIVMGSARSMGVEIVD.

Belongs to the universal ribosomal protein uL11 family. As to quaternary structure, part of the ribosomal stalk of the 50S ribosomal subunit. Interacts with L10 and the large rRNA to form the base of the stalk. L10 forms an elongated spine to which L12 dimers bind in a sequential fashion forming a multimeric L10(L12)X complex. In terms of processing, one or more lysine residues are methylated.

In terms of biological role, forms part of the ribosomal stalk which helps the ribosome interact with GTP-bound translation factors. The sequence is that of Large ribosomal subunit protein uL11 from Helicobacter acinonychis (strain Sheeba).